The primary structure comprises 137 residues: Transcription antitermination protein NusB (137 aa).

This sequence belongs to the NusB family.

Its function is as follows. Involved in transcription antitermination. Required for transcription of ribosomal RNA (rRNA) genes. Binds specifically to the boxA antiterminator sequence of the ribosomal RNA (rrn) operons. In Borreliella afzelii (strain PKo) (Borrelia afzelii), this protein is Transcription antitermination protein NusB.